The chain runs to 359 residues: Ornithine cyclodeaminase (359 aa).

L-ornithine is bound by residues arginine 53 and lysine 77. NAD(+) contacts are provided by residues threonine 92, arginine 120, alanine 147 to glutamine 148, aspartate 169, threonine 209, valine 232 to aspartate 235, lysine 239, and serine 300. Arginine 120 contacts L-ornithine. Residue aspartate 235 coordinates L-ornithine. Aspartate 235 (proton donor/acceptor) is an active-site residue. Valine 301 is a binding site for L-ornithine.

This sequence belongs to the ornithine cyclodeaminase/mu-crystallin family. Requires NAD(+) as cofactor.

The catalysed reaction is L-ornithine = L-proline + NH4(+). It participates in amino-acid biosynthesis; L-proline biosynthesis; L-proline from L-ornithine: step 1/1. In terms of biological role, catalyzes the conversion of L-ornithine into L-proline with release of ammonia. This is Ornithine cyclodeaminase from Brucella abortus biovar 1 (strain 9-941).